The chain runs to 398 residues: Ornithine aminotransferase (398 aa).

Lys255 is modified (N6-(pyridoxal phosphate)lysine).

This sequence belongs to the class-III pyridoxal-phosphate-dependent aminotransferase family. OAT subfamily. Requires pyridoxal 5'-phosphate as cofactor.

The protein resides in the cytoplasm. The enzyme catalyses a 2-oxocarboxylate + L-ornithine = L-glutamate 5-semialdehyde + an L-alpha-amino acid. The protein operates within amino-acid biosynthesis; L-proline biosynthesis; L-glutamate 5-semialdehyde from L-ornithine: step 1/1. Its function is as follows. Catalyzes the interconversion of ornithine to glutamate semialdehyde. This chain is Ornithine aminotransferase, found in Geobacillus sp. (strain WCH70).